Here is a 231-residue protein sequence, read N- to C-terminus: Lipoprotein-releasing system ATP-binding protein LolD (231 aa).

Positions 6–231 constitute an ABC transporter domain; it reads LQVQAVSKSY…YLQAVAEHAQ (226 aa). Residue 42-49 participates in ATP binding; the sequence is GTSGSGKS.

It belongs to the ABC transporter superfamily. Lipoprotein translocase (TC 3.A.1.125) family. The complex is composed of two ATP-binding proteins (LolD) and two transmembrane proteins (LolC and LolE).

The protein localises to the cell inner membrane. In terms of biological role, part of the ABC transporter complex LolCDE involved in the translocation of mature outer membrane-directed lipoproteins, from the inner membrane to the periplasmic chaperone, LolA. Responsible for the formation of the LolA-lipoprotein complex in an ATP-dependent manner. The polypeptide is Lipoprotein-releasing system ATP-binding protein LolD (Shewanella sp. (strain MR-7)).